The chain runs to 264 residues: Movement protein (264 aa).

A compositionally biased stretch (basic residues) spans 210–219 (FRTKPSKRGP). Residues 210 to 264 (FRTKPSKRGPKNNNNLGKGRSGGRPKPKSFDEVEKEFDNLIEDEAETSVADSDSY) form a disordered region. Positions 237-247 (KSFDEVEKEFD) are enriched in basic and acidic residues.

The protein belongs to the tobamovirus movement protein family. Binds to host RBCS at the plasmodesmata; this interaction seems required for viral systemic movement. In resistant plants, interacts with host MBP2C at host microtubules; this interaction prevents virus cell to cell movement. In resistant plants, interacts with host resistance (R) protein (e.g. tomato ToMV resistance protein TM-2(2), AC Q71BG9) at the host plasma membrane; this interaction triggers host defense responses leading to programmed cell death.

The protein resides in the host cytoplasm. Its subcellular location is the host cytoskeleton. The protein localises to the host cell junction. It localises to the host plasmodesma. In terms of biological role, transports viral genome to neighboring plant cells directly through plasmosdesmata, without any budding. The movement protein allows efficient cell to cell propagation, by bypassing the host cell wall barrier. Forms a ribonucleoprotein complex with viral RNA. Binds microtubules and modulates microtubule stability. Can bind double-stranded DNA. Triggers host hypersensitive defense reaction in incompatible plants harboring resistance (R) proteins. In Tomato mosaic virus (strain LII) (ToMV), this protein is Movement protein (MP).